Here is a 108-residue protein sequence, read N- to C-terminus: Small ribosomal subunit protein uS10 (108 aa).

Belongs to the universal ribosomal protein uS10 family. Part of the 30S ribosomal subunit.

In terms of biological role, involved in the binding of tRNA to the ribosomes. In Rhodopirellula baltica (strain DSM 10527 / NCIMB 13988 / SH1), this protein is Small ribosomal subunit protein uS10.